Reading from the N-terminus, the 203-residue chain is Cold-regulated 413 plasma membrane protein 2 (203 aa).

At 1–43 (MGRMDYLAMKTDDVDTVALVNSDMEELKVAAKKLFSDVSKLGG) the chain is on the extracellular side. The chain crosses the membrane as a helical span at residues 44–64 (LGFGVSFLKFLASFAAIYLLI). The Cytoplasmic segment spans residues 65 to 74 (LDRTNWKTKM). Residues 75 to 95 (LTSLLIPYIFLSLPSVIFNFL) traverse the membrane as a helical segment. The Extracellular segment spans residues 96 to 98 (SGD). Residues 99–119 (VGKWIAFVAVVLRLFFPKHFP) form a helical membrane-spanning segment. A topological domain (cytoplasmic) is located at residue aspartate 120. Residues 121–141 (WLEMPGSLILLLVVSPHFLAH) form a helical membrane-spanning segment. The Extracellular portion of the chain corresponds to 142–144 (HIR). Residues 145 to 165 (GTWIGTVISLFIGCYLLQEHI) traverse the membrane as a helical segment. The Cytoplasmic segment spans residues 166 to 179 (RASGGFRNSFTQPR). Residues 180–200 (GVSNTLGIILLLVYPVWALIV) form a helical membrane-spanning segment. Topologically, residues 201–203 (RVM) are extracellular.

Belongs to the Cold-regulated 413 protein family.

Its subcellular location is the cell membrane. The protein is Cold-regulated 413 plasma membrane protein 2 (COR413PM2) of Arabidopsis thaliana (Mouse-ear cress).